Here is a 24-residue protein sequence, read N- to C-terminus: Superoxide dismutase [Cu-Zn] (24 aa).

The protein belongs to the Cu-Zn superoxide dismutase family. In terms of assembly, homodimer. Cu cation serves as cofactor. Requires Zn(2+) as cofactor.

Its subcellular location is the cytoplasm. It carries out the reaction 2 superoxide + 2 H(+) = H2O2 + O2. Functionally, destroys radicals which are normally produced within the cells and which are toxic to biological systems. This is Superoxide dismutase [Cu-Zn] (sod1) from Aquarana catesbeiana (American bullfrog).